We begin with the raw amino-acid sequence, 399 residues long: Elongation factor Tu (399 aa).

In terms of domain architecture, tr-type G spans 10–209; the sequence is KPHVNIGTIG…AVDDYIPTPA (200 aa). The interval 19 to 26 is G1; it reads GHVDHGKT. 19-26 contacts GTP; sequence GHVDHGKT. Mg(2+) is bound at residue Thr26. The tract at residues 60-64 is G2; it reads GITIA. Residues 81–84 are G3; it reads DCPG. Residues 81 to 85 and 136 to 139 each bind GTP; these read DCPGH and NKAD. The interval 136-139 is G4; that stretch reads NKAD. The G5 stretch occupies residues 174–176; sequence SAL.

This sequence belongs to the TRAFAC class translation factor GTPase superfamily. Classic translation factor GTPase family. EF-Tu/EF-1A subfamily. Monomer.

Its subcellular location is the cytoplasm. It carries out the reaction GTP + H2O = GDP + phosphate + H(+). Functionally, GTP hydrolase that promotes the GTP-dependent binding of aminoacyl-tRNA to the A-site of ribosomes during protein biosynthesis. This Campylobacter lari (strain RM2100 / D67 / ATCC BAA-1060) protein is Elongation factor Tu.